We begin with the raw amino-acid sequence, 352 residues long: F-box/kelch-repeat protein At1g57790 (352 aa).

The region spanning 10–56 (KNLWKDLPLELLSSVMTFLEIKDNVRASVVCKSWFEAAVSVRVIDKS) is the F-box domain. Kelch repeat units lie at residues 148-189 (VVFT…HNNV) and 190-234 (VFSN…WNEG).

The polypeptide is F-box/kelch-repeat protein At1g57790 (Arabidopsis thaliana (Mouse-ear cress)).